The primary structure comprises 386 residues: O-methyltransferase 12 (386 aa).

Residues Ser207, Gly231, Asp254, Asp274, and Lys288 each coordinate S-adenosyl-L-homocysteine. S-adenosyl-L-methionine is bound at residue Asp254. Residue His292 is the Proton acceptor of the active site.

Belongs to the class I-like SAM-binding methyltransferase superfamily. Cation-independent O-methyltransferase family. In terms of assembly, homodimer. As to expression, expressed at high levels in all tissues.

It catalyses the reaction 4-hydroxy-3,5-dimethoxyphenethylamine + S-adenosyl-L-methionine = mescaline + S-adenosyl-L-homocysteine + H(+). The catalysed reaction is dopamine + S-adenosyl-L-methionine = 4-methoxytyramine + S-adenosyl-L-homocysteine + H(+). It functions in the pathway aromatic compound metabolism. Its pathway is alkaloid biosynthesis. In terms of biological role, O-methyltransferase participating in the biosynthesis of natural products derived from phenylethylamine, including mescaline, a natural hallucinogen potentially used in psychotherapeutic treatments. Catalyzes the O-methylation of dopamine, 4-hydroxy-3,5-dimethoxyphenethylamine, 4,5-dihydroxy-3-methoxyphenethylamine and N-methyl-4,5-dihydroxy-3-methoxyphenethylamine. Also involved in the conversion of N-methyl-4-hydroxy-3,5-dimethoxyphenethylamine to N-methylmescaline. The sequence is that of O-methyltransferase 12 from Lophophora williamsii (Peyote).